We begin with the raw amino-acid sequence, 520 residues long: Protein U4 (520 aa).

Belongs to the herpesviridae U4 family.

In Elephantid herpesvirus 1 (isolate Asian elephant/Berlin/Kiba/1998) (EIHV-1), this protein is Protein U4.